Here is an 877-residue protein sequence, read N- to C-terminus: (E,E)-geranyllinalool synthase (877 aa).

The Mg(2+) site is built by Asp540 and Asp544. Substrate-binding residues include Asp540, Asp544, Arg677, and Asn680. Residues 540 to 544 (DDFFD) carry the DDXXD motif motif. Asn680, Ser684, and Glu688 together coordinate Mg(2+).

It belongs to the terpene synthase family. Tpsf subfamily. Mg(2+) is required as a cofactor. Requires Mn(2+) as cofactor. Expressed in leaves and flowers.

It is found in the cytoplasm. The catalysed reaction is (2E,6E,10E)-geranylgeranyl diphosphate + H2O = (6E,10E)-geranyllinalool + diphosphate. It functions in the pathway secondary metabolite biosynthesis; terpenoid biosynthesis. Its function is as follows. Involved in the biosynthesis of homoterpenes, attractants of herbivores parasitoids and predators (e.g. predatory mites and parasitoid wasps). Involved in diterpene (C20) biosynthesis. Catalyzes the conversion of geranylgeranyl diphosphate to (E,E)-geranyllinalool, the precursor of the insect-induced volatile C16-homoterpene TMTT. In Arabidopsis thaliana (Mouse-ear cress), this protein is (E,E)-geranyllinalool synthase.